The following is a 554-amino-acid chain: Glypican-1 (554 aa).

A signal peptide spans 1–21; the sequence is MERLCWGWWWHLGILCLMHWA. 7 disulfide bridges follow: cysteine 32–cysteine 68, cysteine 62–cysteine 256, cysteine 69–cysteine 259, cysteine 191–cysteine 343, cysteine 246–cysteine 279, cysteine 268–cysteine 415, and cysteine 272–cysteine 401. N-linked (GlcNAc...) asparagine glycans are attached at residues asparagine 79 and asparagine 116. The disordered stretch occupies residues 346–369; that stretch reads PKKTNKGSKSEERRRKGKATQEDK. The span at 353-369 shows a compositional bias: basic and acidic residues; it reads SKSEERRRKGKATQEDK. 3 O-linked (Xyl...) (heparan sulfate) serine glycosylation sites follow: serine 486, serine 488, and serine 490.

Belongs to the glypican family. O-glycosylated with heparan sulfate side chains.

It localises to the cell membrane. The protein localises to the secreted. The protein resides in the extracellular space. Its function is as follows. Cell surface proteoglycan that bears heparan sulfate. The protein is Glypican-1 (gpc1) of Xenopus tropicalis (Western clawed frog).